We begin with the raw amino-acid sequence, 111 residues long: Phosphoribosyl-ATP pyrophosphatase (111 aa).

This sequence belongs to the PRA-PH family.

Its subcellular location is the cytoplasm. It carries out the reaction 1-(5-phospho-beta-D-ribosyl)-ATP + H2O = 1-(5-phospho-beta-D-ribosyl)-5'-AMP + diphosphate + H(+). The protein operates within amino-acid biosynthesis; L-histidine biosynthesis; L-histidine from 5-phospho-alpha-D-ribose 1-diphosphate: step 2/9. In Pseudomonas putida (strain W619), this protein is Phosphoribosyl-ATP pyrophosphatase.